Here is a 76-residue protein sequence, read N- to C-terminus: uncharacterized protein (76 aa).

This is an uncharacterized protein from Sulfolobus islandicus filamentous virus (isolate Iceland/Hveragerdi) (SIFV).